Reading from the N-terminus, the 532-residue chain is Sodium-dependent lysophosphatidylcholine symporter 1-A (532 aa).

Residues 1–40 are Cytoplasmic-facing; the sequence is MARGEGAEQFSSGLLPTAKSVTQNEIKMVKLPKQQERKRA. Residues 41-70 traverse the membrane as a helical segment; the sequence is LTVWSKVCFAIGGAPYQITGTALGFFLQIF. The Extracellular portion of the chain corresponds to 71 to 81; that stretch reads LLDVAQLNPLN. Residues 82–102 traverse the membrane as a helical segment; sequence ASVILFVGRAWDAVTDPTVGF. The Cytoplasmic segment spans residues 103 to 114; that stretch reads LVSRTPWTRHGR. The chain crosses the membrane as a helical span at residues 115–134; the sequence is MMPWILVSTIPAVLCYFLIW. The Extracellular segment spans residues 135 to 144; it reads VVPPIEQGKM. The helical transmembrane segment at 145 to 169 threads the bilayer; sequence MWYLLFYCLFQTLQTCFHVPYSALT. Topologically, residues 170–176 are cytoplasmic; the sequence is MFISTEQ. A helical membrane pass occupies residues 177–208; it reads RERDSATAYRMTVEVFGTVVGTAIQGQIVGMA. Residues 209–232 are Extracellular-facing; sequence NTPCKNNTSPNNSSNDLIQSNNSH. An intrachain disulfide couples C212 to C464. Residues N214, N220, and N229 are each glycosylated (N-linked (GlcNAc...) asparagine). The chain crosses the membrane as a helical span at residues 233-266; it reads IPLKSNIFDERCAYMIASAVISLIYVVCAAVLFF. Topologically, residues 267–297 are cytoplasmic; the sequence is GVREQDVQGELKAQKRVSFQKGLRLVMGHGP. A helical transmembrane segment spans residues 298 to 324; sequence YVKLVLAFLFTSLAFMLLEGNFAVFIK. Residues 325–335 are Extracellular-facing; it reads YTLGFREDFQN. The helical transmembrane segment at 336–354 threads the bilayer; sequence ILLVIMVSATVSIPMWQWF. At 355 to 358 the chain is on the cytoplasmic side; that stretch reads LCRF. A helical membrane pass occupies residues 359-380; that stretch reads GKKTAVYIGITWAVPFMILVVS. Over 381–383 the chain is Extracellular; the sequence is VNS. A helical transmembrane segment spans residues 384 to 420; the sequence is SLIVSYIVSIAAGVSVGAAFLLPWSMLPDVVDDFKLQ. Topologically, residues 421-430 are cytoplasmic; sequence NPTSQGHEAI. The helical transmembrane segment at 431–457 threads the bilayer; the sequence is FYSFYVFFTKFASGVSLGVSTLALSFA. Residues 458–469 are Extracellular-facing; it reads GYETGVCVQSDS. The chain crosses the membrane as a helical span at residues 470–493; the sequence is VNLTLKLLVSAAPVSLIALGLLIF. Residues 494–532 are Cytoplasmic-facing; it reads MTYPIDEERREYNNKQLQLLLRNEEEEDEMEVLKPDITA.

This sequence belongs to the major facilitator superfamily. As to expression, expressed in the developing nervous system.

The protein resides in the cell membrane. It is found in the endoplasmic reticulum membrane. It catalyses the reaction a 1-acyl-sn-glycero-3-phosphocholine(in) + Na(+)(in) = a 1-acyl-sn-glycero-3-phosphocholine(out) + Na(+)(out). The enzyme catalyses 1-(4Z,7Z,10Z,13Z,16Z,19Z-docosahexaenoyl)-sn-glycero-3-phosphocholine(in) + Na(+)(in) = 1-(4Z,7Z,10Z,13Z,16Z,19Z-docosahexaenoyl)-sn-glycero-3-phosphocholine(out) + Na(+)(out). It carries out the reaction 1-(9Z-octadecenoyl)-sn-glycero-3-phosphocholine(in) + Na(+)(in) = 1-(9Z-octadecenoyl)-sn-glycero-3-phosphocholine(out) + Na(+)(out). The catalysed reaction is 1-hexadecanoyl-sn-glycero-3-phosphocholine(in) + Na(+)(in) = 1-hexadecanoyl-sn-glycero-3-phosphocholine(out) + Na(+)(out). It catalyses the reaction a 1-acyl-sn-glycero-3-phosphoethanolamine(in) + Na(+)(in) = a 1-acyl-sn-glycero-3-phosphoethanolamine(out) + Na(+)(out). In terms of biological role, sodium-dependent lysophosphatidylcholine (LPC) symporter, which plays an essential role for blood-brain barrier formation and function. Specifically expressed in endothelium of the blood-brain barrier of micro-vessels and transports LPC into the brain. Transport of LPC is essential because it constitutes the major mechanism by which docosahexaenoic acid (DHA), an omega-3 fatty acid that is essential for normal brain growth and cognitive function, enters the brain. Transports LPC carrying long-chain fatty acids such LPC oleate and LPC palmitate with a minimum acyl chain length of 14 carbons. Does not transport docosahexaenoic acid in unesterified fatty acid. This is Sodium-dependent lysophosphatidylcholine symporter 1-A (mfsd2aa) from Danio rerio (Zebrafish).